Here is a 207-residue protein sequence, read N- to C-terminus: Ribonuclease HII (207 aa).

Residues 1-207 (MDVLGIDEAG…ATVEKMKNSQ (207 aa)) form the RNase H type-2 domain. 3 residues coordinate a divalent metal cation: D7, E8, and D105.

Belongs to the RNase HII family. It depends on Mn(2+) as a cofactor. The cofactor is Mg(2+).

The protein resides in the cytoplasm. It catalyses the reaction Endonucleolytic cleavage to 5'-phosphomonoester.. In terms of biological role, endonuclease that specifically degrades the RNA of RNA-DNA hybrids. In Methanobrevibacter smithii (strain ATCC 35061 / DSM 861 / OCM 144 / PS), this protein is Ribonuclease HII.